The sequence spans 187 residues: Adenylate kinase (187 aa).

10–15 (GSGKGT) serves as a coordination point for ATP. The NMP stretch occupies residues 30 to 59 (STGDLLRAEVAAGSPLGLKAKEVMARGDLV). Residues T31, R36, 57-59 (DLV), 85-88 (GYPR), and Q92 each bind AMP. Positions 126 to 136 (GRAKAEGREDD) are LID. R127 contacts ATP. The AMP site is built by R133 and R144. G172 lines the ATP pocket.

It belongs to the adenylate kinase family. Monomer.

The protein resides in the cytoplasm. The enzyme catalyses AMP + ATP = 2 ADP. The protein operates within purine metabolism; AMP biosynthesis via salvage pathway; AMP from ADP: step 1/1. In terms of biological role, catalyzes the reversible transfer of the terminal phosphate group between ATP and AMP. Plays an important role in cellular energy homeostasis and in adenine nucleotide metabolism. The polypeptide is Adenylate kinase (Xanthomonas axonopodis pv. citri (strain 306)).